Consider the following 283-residue polypeptide: Pantothenate synthetase (283 aa).

Position 30–37 (30–37 (MGNLHDGH)) interacts with ATP. His37 serves as the catalytic Proton donor. Gln61 lines the (R)-pantoate pocket. Beta-alanine is bound at residue Gln61. Position 149 to 152 (149 to 152 (GEKD)) interacts with ATP. (R)-pantoate is bound at residue Gln155. 186–189 (LSSR) provides a ligand contact to ATP.

Belongs to the pantothenate synthetase family. As to quaternary structure, homodimer.

The protein localises to the cytoplasm. The catalysed reaction is (R)-pantoate + beta-alanine + ATP = (R)-pantothenate + AMP + diphosphate + H(+). The protein operates within cofactor biosynthesis; (R)-pantothenate biosynthesis; (R)-pantothenate from (R)-pantoate and beta-alanine: step 1/1. Catalyzes the condensation of pantoate with beta-alanine in an ATP-dependent reaction via a pantoyl-adenylate intermediate. This chain is Pantothenate synthetase, found in Escherichia coli O6:K15:H31 (strain 536 / UPEC).